The primary structure comprises 151 residues: MMRCVVYSIAKSSPLELVKIYQKQCKQFDCELELVDLFPKNTANAQKVSKELAQKSYSLAFEPYLNPKAKNIALHPKAQRGDSFAFSKMLENHLNINFFIAGAYGFEENFLKGCQAWSLSEMTFSHEVAKIVLCEQIYRALSIIFKHPYHK.

S-adenosyl-L-methionine is bound by residues Ala-101 and 119 to 124 (LSEMTF).

Belongs to the RNA methyltransferase RlmH family. In terms of assembly, homodimer.

Its subcellular location is the cytoplasm. It catalyses the reaction pseudouridine(1915) in 23S rRNA + S-adenosyl-L-methionine = N(3)-methylpseudouridine(1915) in 23S rRNA + S-adenosyl-L-homocysteine + H(+). Functionally, specifically methylates the pseudouridine at position 1915 (m3Psi1915) in 23S rRNA. The sequence is that of Ribosomal RNA large subunit methyltransferase H from Helicobacter pylori (strain G27).